A 528-amino-acid chain; its full sequence is MEHPKRPTPKNEALHIDASGRGESSFSVHRSHSGGHEPFAPSPGSSIGASVSMFSSRNSEAEVGDAEDLDGVRTIMMNIGVPDLLADREIQMRYPEFYQFLLAEQPTWFEPAPSNGTVYRVHHTTPLPDNHKKLRKELPFEMLDLMYRFFRQKHVNSQRKRENKELLEANKQLRIAAVQMFTKAEQEEEYISNSLLKKIQQLNQDKDYLVKKYQKDEESLTKSLMANVAKIPDVHGDEAAAEKLMADKQAEIERLRTYCSRAEKSYQEELMRLRAEKVDHESALEQEQELLINTLGKRMSQMNEEKRKLQQALEMAYLNGFVDFDDTVEVALHASASQKYNGNSPNVSANSPVVNTNSPAVSTSSPLVRNTDQQSTSSYRQQLNETAHLHIENKKLVGMCNQERRRSQATEAEVKKLNQRMSKMEAVLEAIRIEAVRTDGPLAWRLAALSHDNSIDEPPHRMLAERRAHGSSPPTVVVQPSTSRAGSNSTANINNDTHPHAQVAPILATVHPTQRATPARNERPDSHY.

The segment at 1–51 (MEHPKRPTPKNEALHIDASGRGESSFSVHRSHSGGHEPFAPSPGSSIGASV) is disordered. A run of 2 repeats spans residues 185–213 (EQEEEYISNSLLKKIQQLNQDKDYLVKKY) and 285–313 (EQEQELLINTLGKRMSQMNEEKRKLQQAL). Residues 185 to 313 (EQEEEYISNS…EEKRKLQQAL (129 aa)) form a 2 X 29 AA repeats region. 2 disordered regions span residues 467–497 (RAHGSSPPTVVVQPSTSRAGSNSTANINNDT) and 509–528 (TVHPTQRATPARNERPDSHY). A compositionally biased stretch (polar residues) spans 472-496 (SPPTVVVQPSTSRAGSNSTANINND).

This is an uncharacterized protein from Caenorhabditis elegans.